The sequence spans 200 residues: ATP synthase subunit s, mitochondrial (200 aa).

Residues 1–25 (MMMFGKISRQLFSLKKIPWSCDSRY) constitute a mitochondrion transit peptide. Residues 1-61 (MMMFGKISRQ…SEWLLRCGAK (61 aa)) are N-terminal domain. Residue Gly-59 coordinates Mg(2+). LRR repeat units follow at residues 62 to 87 (VRYC…RYKI), 88 to 116 (QAID…RITL), 117 to 141 (CRCH…KSLL), and 142 to 173 (ELEI…LSDL). Thr-93 provides a ligand contact to Mg(2+).

It belongs to the ATP synthase subunit s family. In terms of assembly, homotetramer. Associates with ATP synthase.

The protein localises to the mitochondrion. It localises to the mitochondrion inner membrane. Functionally, involved in regulation of mitochondrial membrane ATP synthase. Necessary for H(+) conduction of ATP synthase. Facilitates energy-driven catalysis of ATP synthesis by blocking a proton leak through an alternative proton exit pathway. This is ATP synthase subunit s, mitochondrial from Rattus norvegicus (Rat).